Here is a 161-residue protein sequence, read N- to C-terminus: Regulator of ribonuclease activity A (161 aa).

The protein belongs to the RraA family. As to quaternary structure, homotrimer. Binds to both RNA-binding sites in the C-terminal region of Rne and to RhlB.

The protein localises to the cytoplasm. Globally modulates RNA abundance by binding to RNase E (Rne) and regulating its endonucleolytic activity. Can modulate Rne action in a substrate-dependent manner by altering the composition of the degradosome. Modulates RNA-binding and helicase activities of the degradosome. In Klebsiella pneumoniae (strain 342), this protein is Regulator of ribonuclease activity A.